Here is a 291-residue protein sequence, read N- to C-terminus: Translocon-associated protein subunit alpha (291 aa).

A signal peptide spans Met-1–Leu-20. Topologically, residues Phe-21–Thr-207 are lumenal. Residues Asp-34–Ala-83 are disordered. A compositionally biased stretch (acidic residues) spans Leu-35–Gly-75. N-linked (GlcNAc...) asparagine glycans are attached at residues Asn-136 and Asn-191. Residues Ile-208 to Leu-228 traverse the membrane as a helical segment. Residues Leu-229 to Glu-291 are Cytoplasmic-facing. Position 247 is a phosphoserine (Ser-247). The residue at position 260 (Thr-260) is a Phosphothreonine. Residues Gln-263–Glu-291 form a disordered region. A Phosphoserine modification is found at Ser-273. Basic residues predominate over residues Pro-274–Lys-284.

This sequence belongs to the TRAP-alpha family. In terms of assembly, heterotetramer of TRAP-alpha, TRAP-beta, TRAP-delta and TRAP-gamma. Interacts with palmitoylated calnexin (CALX), the interaction is required for efficient folding of glycosylated proteins. Post-translationally, phosphorylated in its cytoplasmic tail.

Its subcellular location is the endoplasmic reticulum membrane. In terms of biological role, TRAP proteins are part of a complex whose function is to bind calcium to the ER membrane and thereby regulate the retention of ER resident proteins. May be involved in the recycling of the translocation apparatus after completion of the translocation process or may function as a membrane-bound chaperone facilitating folding of translocated proteins. The protein is Translocon-associated protein subunit alpha (SSR1) of Pongo abelii (Sumatran orangutan).